We begin with the raw amino-acid sequence, 314 residues long: Thymidylate synthase (314 aa).

Residues Arg21 and 176-177 (RR) contribute to the dUMP site. Residue Cys196 is the Nucleophile of the active site. Residues 216–219 (RSAD), Asn227, and 257–259 (HLY) each bind dUMP. Asp219 is a (6R)-5,10-methylene-5,6,7,8-tetrahydrofolate binding site. Ser313 lines the (6R)-5,10-methylene-5,6,7,8-tetrahydrofolate pocket.

This sequence belongs to the thymidylate synthase family. Bacterial-type ThyA subfamily. In terms of assembly, homodimer.

The protein localises to the cytoplasm. The enzyme catalyses dUMP + (6R)-5,10-methylene-5,6,7,8-tetrahydrofolate = 7,8-dihydrofolate + dTMP. Its pathway is pyrimidine metabolism; dTTP biosynthesis. Catalyzes the reductive methylation of 2'-deoxyuridine-5'-monophosphate (dUMP) to 2'-deoxythymidine-5'-monophosphate (dTMP) while utilizing 5,10-methylenetetrahydrofolate (mTHF) as the methyl donor and reductant in the reaction, yielding dihydrofolate (DHF) as a by-product. This enzymatic reaction provides an intracellular de novo source of dTMP, an essential precursor for DNA biosynthesis. In Listeria monocytogenes serotype 4a (strain HCC23), this protein is Thymidylate synthase.